A 108-amino-acid polypeptide reads, in one-letter code: UPF0145 protein Acel_2109 (108 aa).

The protein belongs to the UPF0145 family.

The polypeptide is UPF0145 protein Acel_2109 (Acidothermus cellulolyticus (strain ATCC 43068 / DSM 8971 / 11B)).